Here is a 245-residue protein sequence, read N- to C-terminus: UDP-2,3-diacylglucosamine hydrolase (245 aa).

Residues aspartate 8, histidine 10, aspartate 41, asparagine 79, and histidine 114 each coordinate Mn(2+). 79-80 (NR) contacts substrate. The substrate site is built by aspartate 122, serine 160, lysine 164, lysine 167, and histidine 195. Mn(2+)-binding residues include histidine 195 and histidine 197.

Belongs to the LpxH family. The cofactor is Mn(2+).

It localises to the cell inner membrane. The catalysed reaction is UDP-2-N,3-O-bis[(3R)-3-hydroxytetradecanoyl]-alpha-D-glucosamine + H2O = 2-N,3-O-bis[(3R)-3-hydroxytetradecanoyl]-alpha-D-glucosaminyl 1-phosphate + UMP + 2 H(+). It participates in glycolipid biosynthesis; lipid IV(A) biosynthesis; lipid IV(A) from (3R)-3-hydroxytetradecanoyl-[acyl-carrier-protein] and UDP-N-acetyl-alpha-D-glucosamine: step 4/6. Functionally, hydrolyzes the pyrophosphate bond of UDP-2,3-diacylglucosamine to yield 2,3-diacylglucosamine 1-phosphate (lipid X) and UMP by catalyzing the attack of water at the alpha-P atom. Involved in the biosynthesis of lipid A, a phosphorylated glycolipid that anchors the lipopolysaccharide to the outer membrane of the cell. The sequence is that of UDP-2,3-diacylglucosamine hydrolase from Aromatoleum aromaticum (strain DSM 19018 / LMG 30748 / EbN1) (Azoarcus sp. (strain EbN1)).